We begin with the raw amino-acid sequence, 432 residues long: MTKSAELYQKAQTTIPGGVNSPVRAFNGVGGSPIFIDRADGALIFDADGKAYIDYVGSWGPMILGHNHAVIREAVIQAAQRGLSFGAPTEMEITMAELVSELVPSMEQLRMVNSGTEATMSAIRLARGYTGRDKIIKFEGCYHGHADSLLVKAGSGALTLGQPSSPGVPADFAKHTLTARFNDLDSVRELFAANQGEIACIIVEPVAGNMNCIPPVEGFHEGLREICDQEGALLIFDEVMTGFRVALGGAQAHYNIKPDLTTLGKVIGGGMPVGAFGGRREVMQYIAPTGPVYQAGTLSGNPIAMAAGYACLNLLREEGNEKRLAAKTKQLADGFKSLADQHGIPLLVHQVGGMFGFFFTEQETVTCYEDVARCDVERFKRFFHLMLQHGVYLAPSAFEASFTSLAHGSKEIEATLEAADRSFAILAAEAKA.

N6-(pyridoxal phosphate)lysine is present on Lys265.

Belongs to the class-III pyridoxal-phosphate-dependent aminotransferase family. HemL subfamily. In terms of assembly, homodimer. Requires pyridoxal 5'-phosphate as cofactor.

Its subcellular location is the cytoplasm. The catalysed reaction is (S)-4-amino-5-oxopentanoate = 5-aminolevulinate. The protein operates within porphyrin-containing compound metabolism; protoporphyrin-IX biosynthesis; 5-aminolevulinate from L-glutamyl-tRNA(Glu): step 2/2. The chain is Glutamate-1-semialdehyde 2,1-aminomutase from Vibrio cholerae serotype O1 (strain ATCC 39541 / Classical Ogawa 395 / O395).